A 121-amino-acid chain; its full sequence is Large ribosomal subunit protein bL19 (121 aa).

This sequence belongs to the bacterial ribosomal protein bL19 family.

In terms of biological role, this protein is located at the 30S-50S ribosomal subunit interface and may play a role in the structure and function of the aminoacyl-tRNA binding site. The chain is Large ribosomal subunit protein bL19 from Acidothermus cellulolyticus (strain ATCC 43068 / DSM 8971 / 11B).